The primary structure comprises 630 residues: Ribonucleoside-diphosphate reductase large subunit (630 aa).

Residues Ser-67, 82 to 83 (AC), Gly-111, 317 to 321 (NLCSE), and 459 to 463 (PNATS) contribute to the substrate site. Cys-83 and Cys-334 are oxidised to a cystine. The Proton acceptor role is filled by Asn-317. The Cysteine radical intermediate role is filled by Cys-319. Glu-321 serves as the catalytic Proton acceptor.

The protein belongs to the ribonucleoside diphosphate reductase large chain family. As to quaternary structure, heterotetramer composed of a homodimer of the large subunit (R1) and a homodimer of the small subunit (R2). Larger multisubunit protein complex are also active, composed of (R1)n(R2)n.

The enzyme catalyses a 2'-deoxyribonucleoside 5'-diphosphate + [thioredoxin]-disulfide + H2O = a ribonucleoside 5'-diphosphate + [thioredoxin]-dithiol. With respect to regulation, under complex allosteric control mediated by deoxynucleoside triphosphates and ATP binding. The type of nucleotide bound at the specificity site determines substrate preference. It seems probable that ATP makes the enzyme reduce CDP and UDP, dGTP favors ADP reduction and dTTP favors GDP reduction. In terms of biological role, ribonucleoside-diphosphate reductase holoenzyme provides the precursors necessary for viral DNA synthesis. Allows virus growth in non-dividing cells. Catalyzes the biosynthesis of deoxyribonucleotides from the corresponding ribonucleotides. This Aedes vexans (Inland floodwater mosquito) protein is Ribonucleoside-diphosphate reductase large subunit.